The following is a 92-amino-acid chain: RPQIQVYSRHPPENGKPNILNCYVTQFHPPQIEIQMLKNGEIIPKVEMSDLSFSKDWSFYILAHTEFTPTETDQYACRVNHVSMDKPMTVNW.

Residues P2–T89 enclose the Ig-like C1-type domain. A disulfide bridge links C22 with C77.

Belongs to the beta-2-microglobulin family. In terms of assembly, heterodimer of an alpha chain and a beta chain. Beta-2-microglobulin is the beta-chain of major histocompatibility complex class I molecules.

The protein resides in the secreted. Its function is as follows. Component of the class I major histocompatibility complex (MHC). Involved in the presentation of peptide antigens to the immune system. The protein is Beta-2-microglobulin (B2m) of Mus spretus (Western Mediterranean mouse).